Reading from the N-terminus, the 515-residue chain is Maturase K (515 aa).

It belongs to the intron maturase 2 family. MatK subfamily.

It localises to the plastid. The protein resides in the chloroplast. In terms of biological role, usually encoded in the trnK tRNA gene intron. Probably assists in splicing its own and other chloroplast group II introns. The polypeptide is Maturase K (Pinus luchuensis (Ryukyu island pine)).